Here is a 213-residue protein sequence, read N- to C-terminus: ATP-dependent Clp protease proteolytic subunit 3 (213 aa).

Residue serine 107 is the Nucleophile of the active site. Residue histidine 132 is part of the active site.

The protein belongs to the peptidase S14 family. As to quaternary structure, fourteen ClpP subunits assemble into 2 heptameric rings which stack back to back to give a disk-like structure with a central cavity, resembling the structure of eukaryotic proteasomes.

Its subcellular location is the cytoplasm. It catalyses the reaction Hydrolysis of proteins to small peptides in the presence of ATP and magnesium. alpha-casein is the usual test substrate. In the absence of ATP, only oligopeptides shorter than five residues are hydrolyzed (such as succinyl-Leu-Tyr-|-NHMec, and Leu-Tyr-Leu-|-Tyr-Trp, in which cleavage of the -Tyr-|-Leu- and -Tyr-|-Trp bonds also occurs).. Cleaves peptides in various proteins in a process that requires ATP hydrolysis. Has a chymotrypsin-like activity. Plays a major role in the degradation of misfolded proteins. This chain is ATP-dependent Clp protease proteolytic subunit 3, found in Frankia casuarinae (strain DSM 45818 / CECT 9043 / HFP020203 / CcI3).